A 510-amino-acid chain; its full sequence is GTPase Der (510 aa).

EngA-type G domains lie at 3–167 and 230–405; these read LKLA…GPEA and IRLA…KDWT. Residues 9 to 16, 56 to 60, 119 to 122, 236 to 243, 283 to 287, and 348 to 351 contribute to the GTP site; these read GRPNVGKS, DTAGF, NKAE, GRPNAGKS, DTAGL, and SKWD. The KH-like domain occupies 406 to 490; the sequence is ARAKTGDLNR…PIRLFVRQGK (85 aa).

This sequence belongs to the TRAFAC class TrmE-Era-EngA-EngB-Septin-like GTPase superfamily. EngA (Der) GTPase family. Associates with the 50S ribosomal subunit.

Functionally, GTPase that plays an essential role in the late steps of ribosome biogenesis. This Hyphomonas neptunium (strain ATCC 15444) protein is GTPase Der.